A 299-amino-acid polypeptide reads, in one-letter code: Ribosomal protein L11 methyltransferase (299 aa).

The S-adenosyl-L-methionine site is built by threonine 152, glycine 172, aspartate 194, and asparagine 234.

This sequence belongs to the methyltransferase superfamily. PrmA family.

Its subcellular location is the cytoplasm. It carries out the reaction L-lysyl-[protein] + 3 S-adenosyl-L-methionine = N(6),N(6),N(6)-trimethyl-L-lysyl-[protein] + 3 S-adenosyl-L-homocysteine + 3 H(+). In terms of biological role, methylates ribosomal protein L11. The polypeptide is Ribosomal protein L11 methyltransferase (Geobacter sulfurreducens (strain ATCC 51573 / DSM 12127 / PCA)).